Reading from the N-terminus, the 343-residue chain is 3-isopropylmalate dehydrogenase (343 aa).

Arg-94, Arg-104, Arg-128, and Asp-218 together coordinate substrate. Mg(2+) contacts are provided by Asp-218, Asp-242, and Asp-246. NAD(+) is bound at residue 278 to 290 (GSAPDIAGQNKAN).

Belongs to the isocitrate and isopropylmalate dehydrogenases family. LeuB type 2 subfamily. In terms of assembly, homodimer. The cofactor is Mg(2+). Mn(2+) is required as a cofactor.

The protein resides in the cytoplasm. The enzyme catalyses (2R,3S)-3-isopropylmalate + NAD(+) = 4-methyl-2-oxopentanoate + CO2 + NADH. It functions in the pathway amino-acid biosynthesis; L-leucine biosynthesis; L-leucine from 3-methyl-2-oxobutanoate: step 3/4. Functionally, catalyzes the oxidation of 3-carboxy-2-hydroxy-4-methylpentanoate (3-isopropylmalate) to 3-carboxy-4-methyl-2-oxopentanoate. The product decarboxylates to 4-methyl-2 oxopentanoate. The chain is 3-isopropylmalate dehydrogenase from Bifidobacterium longum subsp. infantis (strain ATCC 15697 / DSM 20088 / JCM 1222 / NCTC 11817 / S12).